Consider the following 76-residue polypeptide: Alpha/kappa-conotoxin-like fe14.2 (76 aa).

The N-terminal stretch at 1-24 (MPSVRSVTCCCLLWMMLSVQLVTP) is a signal peptide. Positions 25 to 39 (GSPGTAQLSGQRTAR) are excised as a propeptide. Intrachain disulfides connect cysteine 46/cysteine 61 and cysteine 50/cysteine 63. Arginine 64 bears the Arginine amide mark. Positions 65–76 (GKRDVVSSSMAV) are excised as a propeptide.

Belongs to the conotoxin J superfamily. Expressed by the venom duct.

Its subcellular location is the secreted. Highly inhibits both nicotinic acetylcholine receptors (neuronal (alpha-3/beta-4) and muscular (alpha-1/beta-1/epsilon/delta) subtypes) and the voltage-gated potassium channel Kv1.6/KCNA6 subtype. The protein is Alpha/kappa-conotoxin-like fe14.2 of Conus ferrugineus (Cone snail).